A 158-amino-acid chain; its full sequence is Low molecular weight phosphotyrosine protein phosphatase (158 aa).

A2 bears the N-acetylalanine mark. C13 functions as the Nucleophile in the catalytic mechanism. R19 is an active-site residue. D130 functions as the Proton donor in the catalytic mechanism. Y132 and Y133 each carry phosphotyrosine.

This sequence belongs to the low molecular weight phosphotyrosine protein phosphatase family. As to quaternary structure, interacts with EPHA2; dephosphorylates EPHA2. Interacts with EPHB1. Interacts with the SH3 domain of SPTAN1. There is no interaction observed for isoforms 2 or 3. Post-translationally, phosphorylated by LCK. Phosphorylation at Tyr-132 increases its phosphatase activity. Not phosphorylated. Expressed in T-lymphocytes.

The protein localises to the cytoplasm. It catalyses the reaction O-phospho-L-tyrosyl-[protein] + H2O = L-tyrosyl-[protein] + phosphate. It carries out the reaction a phosphate monoester + H2O = an alcohol + phosphate. Its activity is regulated as follows. Inhibited by sulfhydryl reagents. In terms of biological role, acts on tyrosine phosphorylated proteins, low-MW aryl phosphates and natural and synthetic acyl phosphates with differences in substrate specificity between isoform 1 and isoform 2. Functionally, does not possess phosphatase activity. This is Low molecular weight phosphotyrosine protein phosphatase from Homo sapiens (Human).